The sequence spans 163 residues: UPF0303 protein SAV_5210 (163 aa).

It belongs to the UPF0303 family.

This chain is UPF0303 protein SAV_5210, found in Streptomyces avermitilis (strain ATCC 31267 / DSM 46492 / JCM 5070 / NBRC 14893 / NCIMB 12804 / NRRL 8165 / MA-4680).